The primary structure comprises 539 residues: Chaperonin GroEL 1 (539 aa).

Residues 30-33 (TLGP), Lys-51, 87-91 (DGTTT), Gly-415, 480-482 (NAA), and Asp-496 each bind ATP.

The protein belongs to the chaperonin (HSP60) family. Forms a cylinder of 14 subunits composed of two heptameric rings stacked back-to-back. Interacts with the co-chaperonin GroES.

The protein localises to the cytoplasm. The catalysed reaction is ATP + H2O + a folded polypeptide = ADP + phosphate + an unfolded polypeptide.. Together with its co-chaperonin GroES, plays an essential role in assisting protein folding. The GroEL-GroES system forms a nano-cage that allows encapsulation of the non-native substrate proteins and provides a physical environment optimized to promote and accelerate protein folding. This Bradyrhizobium sp. (strain ORS 278) protein is Chaperonin GroEL 1.